The chain runs to 609 residues: Nuclear factor 7, brain (609 aa).

Residues 21-75 (NVGSTYPCKRSDGSQHDAEIVKVRYNKQAGREEYYAHYVGLNRRQNEWVDKSRLV) enclose the Tudor-knot domain. Residues 74–84 (LVLTKPPKEGE) are compositionally biased toward basic and acidic residues. Positions 74–129 (LVLTKPPKEGETNGTDQEVTDTAEQPDSKTPQKRKIEEPEPEPKKAKVEEKDASKN) are disordered. A compositionally biased stretch (polar residues) spans 85–102 (TNGTDQEVTDTAEQPDSK). Threonine 103 is subject to Phosphothreonine; by CDK1. A compositionally biased stretch (basic and acidic residues) spans 107–127 (RKIEEPEPEPKKAKVEEKDAS). An RING-type zinc finger spans residues 145–185 (CPLCVELFKDPVMVACGHNFCRSCIDKAWEGQSSFACPECR). The B box-type zinc-finger motif lies at 219 to 260 (RPLEKCSEHDERLKLYCKDDGTLSCVICRDSLKHASHNFLPI). Residues cysteine 224, histidine 227, cysteine 246, and histidine 252 each contribute to the Zn(2+) site. Residues 278–371 (LEASLKVTEQ…SLAKERMEDT (94 aa)) are a coiled coil. Residues 413 to 609 (GPIQYIMWKE…VDPLRFVHNK (197 aa)) enclose the B30.2/SPRY domain.

Monomer. Threonine (predominantly) and serine residues are phosphorylated during oocyte maturation, when CDK1 is active. At the neurula stage, high expression in dorsal embryo region including neural folds and somites. Also high expression in adult brain (CNS) and low expression in oocytes.

The protein resides in the nucleus. Its function is as follows. Transcription factor that determines dorsal-ventral body axis. The chain is Nuclear factor 7, brain from Xenopus laevis (African clawed frog).